Reading from the N-terminus, the 453-residue chain is tRNA modification GTPase MnmE (453 aa).

(6S)-5-formyl-5,6,7,8-tetrahydrofolate is bound by residues Arg-22, Glu-79, and Lys-119. One can recognise a TrmE-type G domain in the interval 215 to 376 (GMKVVIAGRP…LQQHLKSLMG (162 aa)). Residue Asn-225 participates in K(+) binding. GTP contacts are provided by residues 225–230 (NAGKSS), 244–250 (TEIAGTT), 269–272 (DTAG), and 334–337 (NKAD). Residue Ser-229 coordinates Mg(2+). Residues Thr-244, Ile-246, and Thr-249 each coordinate K(+). Thr-250 serves as a coordination point for Mg(2+). Lys-453 is a (6S)-5-formyl-5,6,7,8-tetrahydrofolate binding site.

This sequence belongs to the TRAFAC class TrmE-Era-EngA-EngB-Septin-like GTPase superfamily. TrmE GTPase family. In terms of assembly, homodimer. Heterotetramer of two MnmE and two MnmG subunits. The cofactor is K(+).

The protein resides in the cytoplasm. Functionally, exhibits a very high intrinsic GTPase hydrolysis rate. Involved in the addition of a carboxymethylaminomethyl (cmnm) group at the wobble position (U34) of certain tRNAs, forming tRNA-cmnm(5)s(2)U34. The polypeptide is tRNA modification GTPase MnmE (Shewanella woodyi (strain ATCC 51908 / MS32)).